Here is a 292-residue protein sequence, read N- to C-terminus: 33 kDa chaperonin (292 aa).

2 disulfide bridges follow: cysteine 236-cysteine 238 and cysteine 269-cysteine 272.

Belongs to the HSP33 family. In terms of processing, under oxidizing conditions two disulfide bonds are formed involving the reactive cysteines. Under reducing conditions zinc is bound to the reactive cysteines and the protein is inactive.

It is found in the cytoplasm. Redox regulated molecular chaperone. Protects both thermally unfolding and oxidatively damaged proteins from irreversible aggregation. Plays an important role in the bacterial defense system toward oxidative stress. This chain is 33 kDa chaperonin, found in Ruminiclostridium cellulolyticum (strain ATCC 35319 / DSM 5812 / JCM 6584 / H10) (Clostridium cellulolyticum).